Here is a 258-residue protein sequence, read N- to C-terminus: Phosphoadenosine 5'-phosphosulfate reductase (258 aa).

The active-site Nucleophile; cysteine thiosulfonate intermediate is the Cys244.

This sequence belongs to the PAPS reductase family. CysH subfamily.

Its subcellular location is the cytoplasm. The catalysed reaction is [thioredoxin]-disulfide + sulfite + adenosine 3',5'-bisphosphate + 2 H(+) = [thioredoxin]-dithiol + 3'-phosphoadenylyl sulfate. It participates in sulfur metabolism; hydrogen sulfide biosynthesis; sulfite from sulfate: step 3/3. In terms of biological role, catalyzes the formation of sulfite from phosphoadenosine 5'-phosphosulfate (PAPS) using thioredoxin as an electron donor. The polypeptide is Phosphoadenosine 5'-phosphosulfate reductase (Vibrio atlanticus (strain LGP32) (Vibrio splendidus (strain Mel32))).